An 874-amino-acid polypeptide reads, in one-letter code: Alanine--tRNA ligase (874 aa).

Residues histidine 562, histidine 566, cysteine 665, and histidine 669 each contribute to the Zn(2+) site.

This sequence belongs to the class-II aminoacyl-tRNA synthetase family. Requires Zn(2+) as cofactor.

The protein localises to the cytoplasm. It catalyses the reaction tRNA(Ala) + L-alanine + ATP = L-alanyl-tRNA(Ala) + AMP + diphosphate. In terms of biological role, catalyzes the attachment of alanine to tRNA(Ala) in a two-step reaction: alanine is first activated by ATP to form Ala-AMP and then transferred to the acceptor end of tRNA(Ala). Also edits incorrectly charged Ser-tRNA(Ala) and Gly-tRNA(Ala) via its editing domain. The protein is Alanine--tRNA ligase of Pseudomonas paraeruginosa (strain DSM 24068 / PA7) (Pseudomonas aeruginosa (strain PA7)).